Consider the following 198-residue polypeptide: dTTP/UTP pyrophosphatase (198 aa).

The active-site Proton acceptor is D75.

This sequence belongs to the Maf family. YhdE subfamily. It depends on a divalent metal cation as a cofactor.

Its subcellular location is the cytoplasm. It carries out the reaction dTTP + H2O = dTMP + diphosphate + H(+). It catalyses the reaction UTP + H2O = UMP + diphosphate + H(+). Functionally, nucleoside triphosphate pyrophosphatase that hydrolyzes dTTP and UTP. May have a dual role in cell division arrest and in preventing the incorporation of modified nucleotides into cellular nucleic acids. The sequence is that of dTTP/UTP pyrophosphatase from Wolbachia pipientis wMel.